The sequence spans 551 residues: Rhodopsin kinase grk7-a (551 aa).

Ser36 is subject to Phosphoserine. The RGS domain occupies 57-174; that stretch reads YQSICVEQPI…QNSPFYDRFL (118 aa). One can recognise a Protein kinase domain in the interval 189–451; it reads FYEFRILGKG…DDDPRKHAFF (263 aa). Residues 195–203 and Lys218 contribute to the ATP site; that span reads LGKGGFGEV. Residue Asp314 is the Proton acceptor of the active site. The 66-residue stretch at 452–517 folds into the AGC-kinase C-terminal domain; sequence KSINFQRLEA…GAIPISWQKE (66 aa). Ser487 carries the post-translational modification Phosphoserine. The tract at residues 529 to 551 is disordered; the sequence is DPSREATGGGGNSGEKSGVCSIL. Over residues 542–551 the composition is skewed to low complexity; that stretch reads GEKSGVCSIL. Cys548 carries the post-translational modification Cysteine methyl ester. The S-geranylgeranyl cysteine moiety is linked to residue Cys548. Residues 549-551 constitute a propeptide, removed in mature form; that stretch reads SIL.

It belongs to the protein kinase superfamily. AGC Ser/Thr protein kinase family. GPRK subfamily. Post-translationally, autophosphorylated in vitro at Ser-487. Phosphorylation at Ser-36 is regulated by light and activated by cAMP.

It localises to the membrane. It carries out the reaction L-threonyl-[rhodopsin] + ATP = O-phospho-L-threonyl-[rhodopsin] + ADP + H(+). The catalysed reaction is L-seryl-[rhodopsin] + ATP = O-phospho-L-seryl-[rhodopsin] + ADP + H(+). Retina-specific kinase involved in the shutoff of the photoresponse and adaptation to changing light conditions via cone opsin phosphorylation, including rhodopsin (RHO). In Xenopus laevis (African clawed frog), this protein is Rhodopsin kinase grk7-a (grk7-a).